The sequence spans 415 residues: L-cysteine:1D-myo-inositol 2-amino-2-deoxy-alpha-D-glucopyranoside ligase (415 aa).

The segment at 1 to 20 is disordered; sequence MQSWSETAVPSVPGQGPPLR. Cysteine 43 serves as a coordination point for Zn(2+). L-cysteinyl-5'-AMP contacts are provided by residues 43 to 46, threonine 58, and 81 to 83; these read CGIT and NVT. The 'HIGH' region motif lies at 45 to 55; the sequence is ITPYDATHLGH. The short motif at 187–192 is the 'ERGGDP' region element; it reads ERGGDP. Tryptophan 227 contacts L-cysteinyl-5'-AMP. Cysteine 231 contributes to the Zn(2+) binding site. An L-cysteinyl-5'-AMP-binding site is contributed by 249–251; the sequence is GSD. A Zn(2+)-binding site is contributed by histidine 256. Isoleucine 283 is an L-cysteinyl-5'-AMP binding site. A 'KMSKS' region motif is present at residues 289–293; sequence KMSKS.

It belongs to the class-I aminoacyl-tRNA synthetase family. MshC subfamily. As to quaternary structure, monomer. Zn(2+) is required as a cofactor.

The catalysed reaction is 1D-myo-inositol 2-amino-2-deoxy-alpha-D-glucopyranoside + L-cysteine + ATP = 1D-myo-inositol 2-(L-cysteinylamino)-2-deoxy-alpha-D-glucopyranoside + AMP + diphosphate + H(+). In terms of biological role, catalyzes the ATP-dependent condensation of GlcN-Ins and L-cysteine to form L-Cys-GlcN-Ins. This is L-cysteine:1D-myo-inositol 2-amino-2-deoxy-alpha-D-glucopyranoside ligase from Rhodococcus jostii (strain RHA1).